Reading from the N-terminus, the 182-residue chain is ATP synthase subunit b (182 aa).

The chain crosses the membrane as a helical span at residues 25–45 (VVLAGFAVLFYIVVKFVVPMF).

This sequence belongs to the ATPase B chain family. In terms of assembly, F-type ATPases have 2 components, F(1) - the catalytic core - and F(0) - the membrane proton channel. F(1) has five subunits: alpha(3), beta(3), gamma(1), delta(1), epsilon(1). F(0) has three main subunits: a(1), b(2) and c(10-14). The alpha and beta chains form an alternating ring which encloses part of the gamma chain. F(1) is attached to F(0) by a central stalk formed by the gamma and epsilon chains, while a peripheral stalk is formed by the delta and b chains.

The protein resides in the cell membrane. Its function is as follows. F(1)F(0) ATP synthase produces ATP from ADP in the presence of a proton or sodium gradient. F-type ATPases consist of two structural domains, F(1) containing the extramembraneous catalytic core and F(0) containing the membrane proton channel, linked together by a central stalk and a peripheral stalk. During catalysis, ATP synthesis in the catalytic domain of F(1) is coupled via a rotary mechanism of the central stalk subunits to proton translocation. In terms of biological role, component of the F(0) channel, it forms part of the peripheral stalk, linking F(1) to F(0). This chain is ATP synthase subunit b, found in Arthrobacter sp. (strain FB24).